The following is a 399-amino-acid chain: Guanine nucleotide-binding protein G(f) subunit alpha (399 aa).

The 354-residue stretch at 46 to 399 (TTVKILLLGT…SENVSSMGLF (354 aa)) folds into the G-alpha domain. Residues 49–62 (KILLLGTAESGKTT) are G1 motif. GTP contacts are provided by residues 54-61 (GTAESGKT), 188-194 (LHSRKIT), 221-225 (DVGGQ), 290-293 (NKYD), and A371. The tract at residues 186–194 (DILHSRKIT) is G2 motif. Residue T194 participates in Mg(2+) binding. The G3 motif stretch occupies residues 217–226 (FQMYDVGGQR). Positions 286-293 (IVFLNKYD) are G4 motif. Residues 369–374 (TVATDT) form a G5 motif region.

Belongs to the G-alpha family. In terms of assembly, g proteins are composed of 3 units; alpha, beta and gamma. The alpha chain contains the guanine nucleotide binding site. In terms of tissue distribution, during embryogenesis, expressed primarily in the developing gut and transiently in the amnioserosa.

Its function is as follows. Guanine nucleotide-binding proteins (G proteins) are involved as modulators or transducers in various transmembrane signaling systems. This chain is Guanine nucleotide-binding protein G(f) subunit alpha (Galphaf), found in Drosophila melanogaster (Fruit fly).